Reading from the N-terminus, the 503-residue chain is Sarpagan bridge enzyme 1 (503 aa).

A helical; Signal-anchor for type II membrane protein transmembrane segment spans residues 3 to 23; sequence ISVTTSIALATIVFFLYKLAT. Residue cysteine 442 coordinates heme.

It belongs to the cytochrome P450 family. Heme serves as cofactor. As to expression, highly expressed in roots. Expressed at low levels in leaves, stems and flowers.

It localises to the endoplasmic reticulum membrane. It carries out the reaction (19E)-geissoschizine + reduced [NADPH--hemoprotein reductase] + O2 = polyneuridine aldehyde + oxidized [NADPH--hemoprotein reductase] + 2 H2O + H(+). The catalysed reaction is tetrahydroalstonine + A + reduced [NADPH--hemoprotein reductase] + O2 = alstonine + AH2 + oxidized [NADPH--hemoprotein reductase] + 2 H2O + H(+). The enzyme catalyses ajmalicine + A + reduced [NADPH--hemoprotein reductase] + O2 = serpentine + AH2 + oxidized [NADPH--hemoprotein reductase] + 2 H2O + H(+). It participates in alkaloid biosynthesis; ajmaline biosynthesis. In terms of biological role, monooxygenase involved in the biosynthesis of ajmaline-type monoterpenoid indole alkaloids (MIAs) natural products, important plant-derived pharmaceuticals used in the therapy of heart disorders. Converts by cyclization the strictosidine-derived geissoschizine to the sarpagan alkaloid polyneuridine aldehyde, precursor of vomilenine, an intermediate chemical in the biosynthesis of ajmaline. Converts by aromatization the tetrahydro-beta-carboline alkaloids tetrahydroalstonine and ajmalicine to the corresponding beta-carboline alkaloids alstonine and serpentine, respectively. The sequence is that of Sarpagan bridge enzyme 1 from Rauvolfia serpentina (Serpentine wood).